The following is a 160-amino-acid chain: MPALILPLIEAAVHWPVRGALLGLDLGTKTIGVAASDPDRKLATGVETIARKAFTADAARLLALAAERTACGFVLGLPLNMDGSEGPRAQSTRAFARNLSRLTELPIGLWDERLSTAAVERELIANDVSRAKRAKVIDEHAAIFILQGALDRLAALRRAE.

This sequence belongs to the YqgF nuclease family.

The protein localises to the cytoplasm. Functionally, could be a nuclease involved in processing of the 5'-end of pre-16S rRNA. The sequence is that of Putative pre-16S rRNA nuclease from Rhodopseudomonas palustris (strain ATCC BAA-98 / CGA009).